Here is a 150-residue protein sequence, read N- to C-terminus: Arginine repressor (150 aa).

Belongs to the ArgR family.

Its subcellular location is the cytoplasm. It functions in the pathway amino-acid biosynthesis; L-arginine biosynthesis [regulation]. Its function is as follows. Regulates arginine biosynthesis genes. In Staphylococcus aureus (strain Mu3 / ATCC 700698), this protein is Arginine repressor.